A 134-amino-acid chain; its full sequence is L-ectoine synthase (134 aa).

This sequence belongs to the ectoine synthase family.

The enzyme catalyses (2S)-4-acetamido-2-aminobutanoate = L-ectoine + H2O. Its pathway is amine and polyamine biosynthesis; ectoine biosynthesis; L-ectoine from L-aspartate 4-semialdehyde: step 3/3. Its function is as follows. Catalyzes the circularization of gamma-N-acetyl-alpha,gamma-diaminobutyric acid (ADABA) to ectoine (1,4,5,6-tetrahydro-2-methyl-4-pyrimidine carboxylic acid), which is an excellent osmoprotectant. The sequence is that of L-ectoine synthase from Shouchella clausii (strain KSM-K16) (Alkalihalobacillus clausii).